Here is a 411-residue protein sequence, read N- to C-terminus: Methylthioribose-1-phosphate isomerase (411 aa).

Aspartate 284 (proton donor) is an active-site residue.

The protein belongs to the eIF-2B alpha/beta/delta subunits family. MtnA subfamily.

The protein localises to the cytoplasm. It is found in the nucleus. The catalysed reaction is 5-(methylsulfanyl)-alpha-D-ribose 1-phosphate = 5-(methylsulfanyl)-D-ribulose 1-phosphate. It participates in amino-acid biosynthesis; L-methionine biosynthesis via salvage pathway; L-methionine from S-methyl-5-thio-alpha-D-ribose 1-phosphate: step 1/6. Functionally, catalyzes the interconversion of methylthioribose-1-phosphate (MTR-1-P) into methylthioribulose-1-phosphate (MTRu-1-P). The chain is Methylthioribose-1-phosphate isomerase from Komagataella phaffii (strain GS115 / ATCC 20864) (Yeast).